A 137-amino-acid chain; its full sequence is Thionin BTH7 (137 aa).

An N-terminal signal peptide occupies residues M1 to G28. Intrachain disulfides connect C31-C68, C32-C60, C40-C58, and C44-C54. Positions L75 to A137 are cleaved as a propeptide — acidic domain.

The protein belongs to the plant thionin (TC 1.C.44) family. 4 C-C subfamily.

The protein localises to the secreted. In terms of biological role, thionins are small plant proteins which are toxic to animal cells. They seem to exert their toxic effect at the level of the cell membrane. Their precise function is not known. This is Thionin BTH7 from Hordeum vulgare (Barley).